A 1211-amino-acid chain; its full sequence is DNA polymerase beta (1211 aa).

4 consecutive repeat copies span residues 1074–1077 (KPAG), 1078–1081 (KPAG), 1082–1085 (NPAG), and 1086–1089 (NPAG). Residues 1074 to 1089 (KPAGKPAGNPAGNPAG) are 4 X 4 AA tandem repeats of [NK]-[P]-A-G.

This sequence belongs to the DNA polymerase type-B family.

It catalyses the reaction DNA(n) + a 2'-deoxyribonucleoside 5'-triphosphate = DNA(n+1) + diphosphate. In terms of biological role, DNA-directed DNA polymerase involved in viral DNA replication. The sequence is that of DNA polymerase beta (DPOL) from African swine fever virus (strain Badajoz 1971 Vero-adapted) (Ba71V).